Consider the following 69-residue polypeptide: Protein SlyX homolog (69 aa).

Belongs to the SlyX family.

The polypeptide is Protein SlyX homolog (Pseudomonas paraeruginosa (strain DSM 24068 / PA7) (Pseudomonas aeruginosa (strain PA7))).